We begin with the raw amino-acid sequence, 76 residues long: Cyclin-dependent kinases regulatory subunit (76 aa).

The protein belongs to the CKS family. Forms a homohexamer that can probably bind six kinase subunits.

Functionally, binds to the catalytic subunit of the cyclin dependent kinases and is essential for their biological function. This Patella vulgata (Common limpet) protein is Cyclin-dependent kinases regulatory subunit.